The sequence spans 100 residues: Aspartyl/glutamyl-tRNA(Asn/Gln) amidotransferase subunit C (100 aa).

The protein belongs to the GatC family. In terms of assembly, heterotrimer of A, B and C subunits.

The enzyme catalyses L-glutamyl-tRNA(Gln) + L-glutamine + ATP + H2O = L-glutaminyl-tRNA(Gln) + L-glutamate + ADP + phosphate + H(+). It carries out the reaction L-aspartyl-tRNA(Asn) + L-glutamine + ATP + H2O = L-asparaginyl-tRNA(Asn) + L-glutamate + ADP + phosphate + 2 H(+). Its function is as follows. Allows the formation of correctly charged Asn-tRNA(Asn) or Gln-tRNA(Gln) through the transamidation of misacylated Asp-tRNA(Asn) or Glu-tRNA(Gln) in organisms which lack either or both of asparaginyl-tRNA or glutaminyl-tRNA synthetases. The reaction takes place in the presence of glutamine and ATP through an activated phospho-Asp-tRNA(Asn) or phospho-Glu-tRNA(Gln). In Streptococcus gordonii (strain Challis / ATCC 35105 / BCRC 15272 / CH1 / DL1 / V288), this protein is Aspartyl/glutamyl-tRNA(Asn/Gln) amidotransferase subunit C.